The following is a 469-amino-acid chain: Origin recognition complex subunit 6 (469 aa).

2 stretches are compositionally biased toward low complexity: residues 218–234 and 275–308; these read SSTLNNTTTSTTTTAPK and ATPTLSSSSSSSSSSSSSLSPPLSSNPTTDLSST. Disordered regions lie at residues 218-241, 275-309, 356-423, and 436-469; these read SSTLNNTTTSTTTTAPKSPIPIPS, ATPTLSSSSSSSSSSSSSLSPPLSSNPTTDLSSTN, ESPF…EGDL, and KEQQFNDWKNSDFAKSKPTPVNATKQLTLDSFFK. Basic and acidic residues-rich tracts occupy residues 380-390 and 409-423; these read SRDELEKESEL and QKEKSVKNKINEGDL. Positions 454–469 are enriched in polar residues; that stretch reads TPVNATKQLTLDSFFK.

The protein belongs to the ORC6 family. In terms of assembly, ORC is composed of six subunits.

Its subcellular location is the nucleus. In terms of biological role, component of the origin recognition complex (ORC) that binds origins of replication. DNA-binding is ATP-dependent, however specific DNA sequences that define origins of replication have not been identified so far. ORC is required to assemble the pre-replication complex necessary to initiate DNA replication. This Dictyostelium discoideum (Social amoeba) protein is Origin recognition complex subunit 6 (orcF).